Here is a 971-residue protein sequence, read N- to C-terminus: Isoleucine--tRNA ligase (971 aa).

The 'HIGH' region signature appears at P64 to H74. E602 lines the L-isoleucyl-5'-AMP pocket. The 'KMSKS' region signature appears at K643–S647. K646 is an ATP binding site.

The protein belongs to the class-I aminoacyl-tRNA synthetase family. IleS type 1 subfamily. In terms of assembly, monomer.

It localises to the cytoplasm. It carries out the reaction tRNA(Ile) + L-isoleucine + ATP = L-isoleucyl-tRNA(Ile) + AMP + diphosphate. Catalyzes the attachment of isoleucine to tRNA(Ile). As IleRS can inadvertently accommodate and process structurally similar amino acids such as valine, to avoid such errors it has two additional distinct tRNA(Ile)-dependent editing activities. One activity is designated as 'pretransfer' editing and involves the hydrolysis of activated Val-AMP. The other activity is designated 'posttransfer' editing and involves deacylation of mischarged Val-tRNA(Ile). The chain is Isoleucine--tRNA ligase from Bartonella henselae (strain ATCC 49882 / DSM 28221 / CCUG 30454 / Houston 1) (Rochalimaea henselae).